The primary structure comprises 381 residues: Cytochrome b (381 aa).

Helical transmembrane passes span 34-54, 78-99, 114-134, and 179-199; these read FGSL…FLAM, WLIR…YIHI, WNIG…GYVL, and FFAF…IHVL. Positions 84 and 98 each coordinate heme b. His183 and His197 together coordinate heme b. His202 is a binding site for a ubiquinone. Transmembrane regions (helical) follow at residues 227 to 247, 289 to 309, 321 to 341, and 348 to 368; these read YKDA…ALFL, LGGV…PLLH, LTQV…WIGG, and FILI…IAMP.

This sequence belongs to the cytochrome b family. In terms of assembly, the cytochrome bc1 complex contains 3 respiratory subunits (MT-CYB, CYC1 and UQCRFS1), 2 core proteins (UQCRC1 and UQCRC2) and probably 6 low-molecular weight proteins. The cofactor is heme b.

Its subcellular location is the mitochondrion inner membrane. Its function is as follows. Component of the ubiquinol-cytochrome c reductase complex (complex III or cytochrome b-c1 complex) that is part of the mitochondrial respiratory chain. The b-c1 complex mediates electron transfer from ubiquinol to cytochrome c. Contributes to the generation of a proton gradient across the mitochondrial membrane that is then used for ATP synthesis. The chain is Cytochrome b (mt-cyb) from Isurus paucus (Longfin mako shark).